The chain runs to 117 residues: Putative iron-sulfur cluster insertion protein ErpA (117 aa).

Iron-sulfur cluster is bound by residues cysteine 45, cysteine 109, and cysteine 111.

The protein belongs to the HesB/IscA family. In terms of assembly, homodimer. It depends on iron-sulfur cluster as a cofactor.

In terms of biological role, required for insertion of 4Fe-4S clusters. The chain is Putative iron-sulfur cluster insertion protein ErpA from Methylobacillus flagellatus (strain ATCC 51484 / DSM 6875 / VKM B-1610 / KT).